The primary structure comprises 233 residues: Apoptosis regulator Bcl-2 (233 aa).

The short motif at 10–30 (DNREIVLKYIHYKLSQRGYDW) is the BH4 element. Residues 32–86 (AGEDRPPVPPAPAPAAAPAAVAAAGASSHHRPEPPGSAAASEVPPAEGLRPAPPG) are disordered. Residues 87-101 (VHLALRQAGDEFSRR) carry the BH3 motif. The BH1 motif lies at 130–149 (ELFRDGVNWGRIVAFFEFGG). A BH2 motif is present at residues 181 to 196 (NWIQDNGGWDAFVELY). Residues 208–228 (WISLKTILSLVLVGACITLGA) traverse the membrane as a helical segment.

Belongs to the Bcl-2 family. As to quaternary structure, forms homodimers, and heterodimers with BAX, BAD, BAK and Bcl-X(L). Heterodimerization with BAX requires intact BH1 and BH2 motifs, and is necessary for anti-apoptotic activity. Also interacts with APAF1 and RAF-1. As to expression, in adult chicken expressed, in thymus, spleen, kidney, heart, ovary and brain, with the highest levels in the thymus. In the embryo, highly levels expressed in all tissues with high levels in the bursa of Fabricius.

The protein localises to the mitochondrion outer membrane. It is found in the nucleus membrane. The protein resides in the endoplasmic reticulum membrane. It localises to the cytoplasm. Functionally, suppresses apoptosis in a variety of cell systems including factor-dependent lymphohematopoietic and neural cells. Regulates cell death by controlling the mitochondrial membrane permeability. Appears to function in a feedback loop system with caspases. Inhibits caspase activity either by preventing the release of cytochrome c from the mitochondria and/or by binding to the apoptosis-activating factor (APAF-1). The polypeptide is Apoptosis regulator Bcl-2 (BCL2) (Gallus gallus (Chicken)).